The sequence spans 239 residues: Endonuclease V (239 aa).

Residues aspartate 50 and aspartate 118 each coordinate Mg(2+).

The protein belongs to the endonuclease V family. It depends on Mg(2+) as a cofactor.

Its subcellular location is the cytoplasm. It carries out the reaction Endonucleolytic cleavage at apurinic or apyrimidinic sites to products with a 5'-phosphate.. Functionally, DNA repair enzyme involved in the repair of deaminated bases. Selectively cleaves double-stranded DNA at the second phosphodiester bond 3' to a deoxyinosine leaving behind the intact lesion on the nicked DNA. This is Endonuclease V from Xylella fastidiosa (strain Temecula1 / ATCC 700964).